Reading from the N-terminus, the 410-residue chain is LL-diaminopimelate aminotransferase (410 aa).

Residues Tyr-15 and Gly-42 each contribute to the substrate site. Pyridoxal 5'-phosphate is bound by residues Tyr-72, 108-109 (SK), Tyr-132, Asn-187, Tyr-218, and 246-248 (SFS). Positions 109, 132, and 187 each coordinate substrate. Position 249 is an N6-(pyridoxal phosphate)lysine (Lys-249). Positions 257 and 292 each coordinate pyridoxal 5'-phosphate. 2 residues coordinate substrate: Asn-292 and Arg-388.

This sequence belongs to the class-I pyridoxal-phosphate-dependent aminotransferase family. LL-diaminopimelate aminotransferase subfamily. Homodimer. Requires pyridoxal 5'-phosphate as cofactor.

The enzyme catalyses (2S,6S)-2,6-diaminopimelate + 2-oxoglutarate = (S)-2,3,4,5-tetrahydrodipicolinate + L-glutamate + H2O + H(+). The protein operates within amino-acid biosynthesis; L-lysine biosynthesis via DAP pathway; LL-2,6-diaminopimelate from (S)-tetrahydrodipicolinate (aminotransferase route): step 1/1. In terms of biological role, involved in the synthesis of meso-diaminopimelate (m-DAP or DL-DAP), required for both lysine and peptidoglycan biosynthesis. Catalyzes the direct conversion of tetrahydrodipicolinate to LL-diaminopimelate. The polypeptide is LL-diaminopimelate aminotransferase (Geobacter metallireducens (strain ATCC 53774 / DSM 7210 / GS-15)).